We begin with the raw amino-acid sequence, 125 residues long: Succinate dehydrogenase assembly factor 3, mitochondrial (125 aa).

Residues 1–30 (MPGKHVSRVRALYRRILLLHRALPPDLKAL) constitute a mitochondrion transit peptide.

This sequence belongs to the complex I LYR family. SDHAF3 subfamily. As to quaternary structure, interacts with Sdhb within an Sdha-Sdhb subcomplex.

It is found in the mitochondrion matrix. Plays an essential role in the assembly of succinate dehydrogenase (SDH), an enzyme complex (also referred to as respiratory complex II) that is a component of both the tricarboxylic acid (TCA) cycle and the mitochondrial electron transport chain, and which couples the oxidation of succinate to fumarate with the reduction of ubiquinone (coenzyme Q) to ubiquinol. Promotes maturation of the iron-sulfur protein subunit Sdhb of the SDH catalytic dimer, protecting it from the deleterious effects of oxidants. May act together with SDHAF1. This chain is Succinate dehydrogenase assembly factor 3, mitochondrial, found in Mus musculus (Mouse).